The primary structure comprises 338 residues: Lipoate-protein ligase A (338 aa).

The BPL/LPL catalytic domain maps to 29 to 216 (DPNQRVLFLW…AFFAHYGARV (188 aa)). Residues R71, 76 to 79 (GAVF), and K134 contribute to the ATP site. A (R)-lipoate-binding site is contributed by K134.

It belongs to the LplA family. Monomer.

It is found in the cytoplasm. The enzyme catalyses L-lysyl-[lipoyl-carrier protein] + (R)-lipoate + ATP = N(6)-[(R)-lipoyl]-L-lysyl-[lipoyl-carrier protein] + AMP + diphosphate + H(+). It functions in the pathway protein modification; protein lipoylation via exogenous pathway; protein N(6)-(lipoyl)lysine from lipoate: step 1/2. It participates in protein modification; protein lipoylation via exogenous pathway; protein N(6)-(lipoyl)lysine from lipoate: step 2/2. Its function is as follows. Catalyzes both the ATP-dependent activation of exogenously supplied lipoate to lipoyl-AMP and the transfer of the activated lipoyl onto the lipoyl domains of lipoate-dependent enzymes. In Aeromonas salmonicida (strain A449), this protein is Lipoate-protein ligase A.